Reading from the N-terminus, the 528-residue chain is Propionate catabolism operon regulatory protein (528 aa).

The 244-residue stretch at 218-461 (MLGQSPQMEQ…RNMMERLALF (244 aa)) folds into the Sigma-54 factor interaction domain. 318–327 (AHGGTLFLDE) contacts ATP. A DNA-binding region (H-T-H motif) is located at residues 508–527 (KTAAANYLGISRTTFWRRLK).

Its function is as follows. Involved in the transcriptional regulation of the propionate catabolism operon. This Escherichia coli (strain K12) protein is Propionate catabolism operon regulatory protein (prpR).